A 227-amino-acid chain; its full sequence is NADH-quinone oxidoreductase subunit C (227 aa).

This sequence belongs to the complex I 30 kDa subunit family. As to quaternary structure, NDH-1 is composed of 14 different subunits. Subunits NuoB, C, D, E, F, and G constitute the peripheral sector of the complex.

It localises to the cell inner membrane. The catalysed reaction is a quinone + NADH + 5 H(+)(in) = a quinol + NAD(+) + 4 H(+)(out). NDH-1 shuttles electrons from NADH, via FMN and iron-sulfur (Fe-S) centers, to quinones in the respiratory chain. The immediate electron acceptor for the enzyme in this species is believed to be ubiquinone. Couples the redox reaction to proton translocation (for every two electrons transferred, four hydrogen ions are translocated across the cytoplasmic membrane), and thus conserves the redox energy in a proton gradient. The sequence is that of NADH-quinone oxidoreductase subunit C from Legionella pneumophila (strain Lens).